The sequence spans 190 residues: Mediator of RNA polymerase II transcription subunit 28 (190 aa).

Residues 76 to 108 (MLIKDENQDLSIEIQRKEALLQKHYNRLEEWKA) adopt a coiled-coil conformation.

This sequence belongs to the Mediator complex subunit 28 family. As to quaternary structure, component of the Mediator complex.

The protein resides in the nucleus. In terms of biological role, component of the Mediator complex, a coactivator involved in the regulated transcription of nearly all RNA polymerase II-dependent genes. Mediator functions as a bridge to convey information from gene-specific regulatory proteins to the basal RNA polymerase II transcription machinery. Mediator is recruited to promoters by direct interactions with regulatory proteins and serves as a scaffold for the assembly of a functional preinitiation complex with RNA polymerase II and the general transcription factors. The sequence is that of Mediator of RNA polymerase II transcription subunit 28 (MED28) from Drosophila pseudoobscura pseudoobscura (Fruit fly).